We begin with the raw amino-acid sequence, 438 residues long: Putative pectate lyase 14 (438 aa).

The N-terminal stretch at 1-26 is a signal peptide; the sequence is MVVARTLFSISATLIIFLALFLHVNA. Residues asparagine 40, asparagine 46, and asparagine 73 are each glycosylated (N-linked (GlcNAc...) asparagine). The Ca(2+) site is built by aspartate 236, aspartate 260, and aspartate 264. The active site involves arginine 316.

It belongs to the polysaccharide lyase 1 family. Ca(2+) is required as a cofactor.

The catalysed reaction is Eliminative cleavage of (1-&gt;4)-alpha-D-galacturonan to give oligosaccharides with 4-deoxy-alpha-D-galact-4-enuronosyl groups at their non-reducing ends.. It functions in the pathway glycan metabolism; pectin degradation; 2-dehydro-3-deoxy-D-gluconate from pectin: step 2/5. This chain is Putative pectate lyase 14, found in Arabidopsis thaliana (Mouse-ear cress).